The sequence spans 644 residues: 3D-(3,5/4)-trihydroxycyclohexane-1,2-dione hydrolase (644 aa).

Glutamate 65 provides a ligand contact to thiamine diphosphate. The interval 442–522 (SLPGDLQRMW…INVLLFDNSG (81 aa)) is thiamine pyrophosphate binding. 2 residues coordinate Mg(2+): aspartate 493 and asparagine 520.

This sequence belongs to the TPP enzyme family. It depends on Mg(2+) as a cofactor. Thiamine diphosphate is required as a cofactor.

The catalysed reaction is 3D-3,5/4-trihydroxycyclohexane-1,2-dione + H2O = 5-deoxy-D-glucuronate + H(+). The protein operates within polyol metabolism; myo-inositol degradation into acetyl-CoA; acetyl-CoA from myo-inositol: step 3/7. In terms of biological role, involved in the cleavage of the C1-C2 bond of 3D-(3,5/4)-trihydroxycyclohexane-1,2-dione (THcHDO) to yield 5-deoxy-glucuronate (5DG). The polypeptide is 3D-(3,5/4)-trihydroxycyclohexane-1,2-dione hydrolase (Bacillus anthracis (strain A0248)).